Consider the following 879-residue polypeptide: Alanine--tRNA ligase (879 aa).

The Zn(2+) site is built by histidine 566, histidine 570, cysteine 668, and histidine 672.

It belongs to the class-II aminoacyl-tRNA synthetase family. Zn(2+) is required as a cofactor.

Its subcellular location is the cytoplasm. The enzyme catalyses tRNA(Ala) + L-alanine + ATP = L-alanyl-tRNA(Ala) + AMP + diphosphate. Catalyzes the attachment of alanine to tRNA(Ala) in a two-step reaction: alanine is first activated by ATP to form Ala-AMP and then transferred to the acceptor end of tRNA(Ala). Also edits incorrectly charged Ser-tRNA(Ala) and Gly-tRNA(Ala) via its editing domain. This Listeria monocytogenes serovar 1/2a (strain ATCC BAA-679 / EGD-e) protein is Alanine--tRNA ligase.